The primary structure comprises 68 residues: uncharacterized protein (68 aa).

An HMA domain is found at 2–67 (KTITLNIKGI…VIEDAGFDAT (66 aa)). Positions 13 and 16 each coordinate a metal cation.

This is an uncharacterized protein from Haemophilus influenzae (strain ATCC 51907 / DSM 11121 / KW20 / Rd).